The sequence spans 148 residues: Deoxyuridine 5'-triphosphate nucleotidohydrolase (148 aa).

Substrate-binding positions include 67–69, Asn-80, 84–86, and Met-94; these read RSG and LID.

This sequence belongs to the dUTPase family. The cofactor is Mg(2+).

It carries out the reaction dUTP + H2O = dUMP + diphosphate + H(+). It participates in pyrimidine metabolism; dUMP biosynthesis; dUMP from dCTP (dUTP route): step 2/2. In terms of biological role, this enzyme is involved in nucleotide metabolism: it produces dUMP, the immediate precursor of thymidine nucleotides and it decreases the intracellular concentration of dUTP so that uracil cannot be incorporated into DNA. The chain is Deoxyuridine 5'-triphosphate nucleotidohydrolase from Ralstonia nicotianae (strain ATCC BAA-1114 / GMI1000) (Ralstonia solanacearum).